We begin with the raw amino-acid sequence, 181 residues long: MHLTLQSVYPAIIIIFFLYKKIKRSIGYQPLKPRWLFTRIILFSLFAFGLSIFSAIHPFLYGYLILGILGGWLLVFFAKKNISFEKRRGKIYFRTHIWVEVILLTLFLSRFLYRVTELYLTSPDLNRLGSYSQSIGTDPLTIGVCFLIAVYYIGFSSFIIKLSRNELEQHEYNKEKDILAR.

Transmembrane regions (helical) follow at residues 5–22, 35–57, 61–78, 91–113, and 140–162; these read LQSV…YKKI, WLFT…SAIH, YGYL…VFFA, IYFR…RFLY, and LTIG…IIKL.

It is found in the cell membrane. The sequence is that of Protein csk22 (csk22) from Bacillus subtilis (strain 168).